A 300-amino-acid chain; its full sequence is Acetylglutamate kinase (300 aa).

Substrate-binding positions include 68–69 (GG), arginine 90, and asparagine 194.

Belongs to the acetylglutamate kinase family. ArgB subfamily.

The protein resides in the cytoplasm. The catalysed reaction is N-acetyl-L-glutamate + ATP = N-acetyl-L-glutamyl 5-phosphate + ADP. It functions in the pathway amino-acid biosynthesis; L-arginine biosynthesis; N(2)-acetyl-L-ornithine from L-glutamate: step 2/4. In terms of biological role, catalyzes the ATP-dependent phosphorylation of N-acetyl-L-glutamate. This is Acetylglutamate kinase from Methanocaldococcus jannaschii (strain ATCC 43067 / DSM 2661 / JAL-1 / JCM 10045 / NBRC 100440) (Methanococcus jannaschii).